The primary structure comprises 200 residues: Imidazole glycerol phosphate synthase subunit HisH (200 aa).

In terms of domain architecture, Glutamine amidotransferase type-1 spans 3 to 200; the sequence is DVALIDAGGA…LRNFLEMSFP (198 aa). Cys78 functions as the Nucleophile in the catalytic mechanism. Catalysis depends on residues His179 and Glu181.

Heterodimer of HisH and HisF.

It localises to the cytoplasm. The enzyme catalyses 5-[(5-phospho-1-deoxy-D-ribulos-1-ylimino)methylamino]-1-(5-phospho-beta-D-ribosyl)imidazole-4-carboxamide + L-glutamine = D-erythro-1-(imidazol-4-yl)glycerol 3-phosphate + 5-amino-1-(5-phospho-beta-D-ribosyl)imidazole-4-carboxamide + L-glutamate + H(+). The catalysed reaction is L-glutamine + H2O = L-glutamate + NH4(+). The protein operates within amino-acid biosynthesis; L-histidine biosynthesis; L-histidine from 5-phospho-alpha-D-ribose 1-diphosphate: step 5/9. Functionally, IGPS catalyzes the conversion of PRFAR and glutamine to IGP, AICAR and glutamate. The HisH subunit catalyzes the hydrolysis of glutamine to glutamate and ammonia as part of the synthesis of IGP and AICAR. The resulting ammonia molecule is channeled to the active site of HisF. In Xanthomonas axonopodis pv. citri (strain 306), this protein is Imidazole glycerol phosphate synthase subunit HisH.